The primary structure comprises 735 residues: Photosystem I P700 chlorophyll a apoprotein A2 (735 aa).

Helical transmembrane passes span 47-70, 136-159, 176-200, 274-292, 331-354, 370-396, 418-440, and 518-536; these read IFAS…FHVA, LYNG…LHLQ, LNHH…HVAI, MAHH…GHMY, LHFQ…QHMY, AALY…IFFI, AIIS…LYVH, and FLVH…LILV. Residues Cys-560 and Cys-569 each contribute to the [4Fe-4S] cluster site. A run of 2 helical transmembrane segments spans residues 576-597 and 644-666; these read AFYL…YWHW and LSVW…MFLI. Chlorophyll a contacts are provided by His-655, Met-663, and Tyr-671. Trp-672 lines the phylloquinone pocket. Residues 708-728 traverse the membrane as a helical segment; it reads LVGLVHFSVGYIFTYAAFLIA.

It belongs to the PsaA/PsaB family. The PsaA/B heterodimer binds the P700 chlorophyll special pair and subsequent electron acceptors. PSI consists of a core antenna complex that captures photons, and an electron transfer chain that converts photonic excitation into a charge separation. The eukaryotic PSI reaction center is composed of at least 11 subunits. P700 is a chlorophyll a/chlorophyll a' dimer, A0 is one or more chlorophyll a, A1 is one or both phylloquinones and FX is a shared 4Fe-4S iron-sulfur center. is required as a cofactor.

The protein resides in the plastid. Its subcellular location is the chloroplast thylakoid membrane. The enzyme catalyses reduced [plastocyanin] + hnu + oxidized [2Fe-2S]-[ferredoxin] = oxidized [plastocyanin] + reduced [2Fe-2S]-[ferredoxin]. PsaA and PsaB bind P700, the primary electron donor of photosystem I (PSI), as well as the electron acceptors A0, A1 and FX. PSI is a plastocyanin/cytochrome c6-ferredoxin oxidoreductase, converting photonic excitation into a charge separation, which transfers an electron from the donor P700 chlorophyll pair to the spectroscopically characterized acceptors A0, A1, FX, FA and FB in turn. Oxidized P700 is reduced on the lumenal side of the thylakoid membrane by plastocyanin or cytochrome c6. This is Photosystem I P700 chlorophyll a apoprotein A2 from Stigeoclonium helveticum (Green alga).